We begin with the raw amino-acid sequence, 159 residues long: Kojic acid related protein 6 (159 aa).

Negatively regulates mycelium growth and conidial formation and is required for stress tolerance. Plays a role in kojic acid synthesis in coordination with kojA, kojR and kojT where it acts upstream of kojA. In Aspergillus oryzae (strain ATCC 42149 / RIB 40) (Yellow koji mold), this protein is Kojic acid related protein 6.